Here is a 177-residue protein sequence, read N- to C-terminus: Large ribosomal subunit protein uL6 (177 aa).

The protein belongs to the universal ribosomal protein uL6 family. In terms of assembly, part of the 50S ribosomal subunit.

In terms of biological role, this protein binds to the 23S rRNA, and is important in its secondary structure. It is located near the subunit interface in the base of the L7/L12 stalk, and near the tRNA binding site of the peptidyltransferase center. This is Large ribosomal subunit protein uL6 from Bordetella bronchiseptica (strain ATCC BAA-588 / NCTC 13252 / RB50) (Alcaligenes bronchisepticus).